The sequence spans 105 residues: Heat shock protein HspQ (105 aa).

Residues 74-105 form a disordered region; it reads SSETQDEHPEQPSMDELARTIRKQLQAPRLRN.

The protein belongs to the HspQ family.

It is found in the cytoplasm. In terms of biological role, involved in the degradation of certain denaturated proteins, including DnaA, during heat shock stress. The sequence is that of Heat shock protein HspQ from Citrobacter koseri (strain ATCC BAA-895 / CDC 4225-83 / SGSC4696).